The sequence spans 104 residues: Protein RnfH (104 aa).

Positions 80–104 are disordered; sequence PLTADPKLNRKRRAKEKASAGKASN.

This sequence belongs to the UPF0125 (RnfH) family.

The polypeptide is Protein RnfH (Alcanivorax borkumensis (strain ATCC 700651 / DSM 11573 / NCIMB 13689 / SK2)).